The chain runs to 261 residues: Dienlactone hydrolase 1 (261 aa).

Active-site residues include cysteine 147, aspartate 194, and histidine 226.

This sequence belongs to the dienelactone hydrolase family.

The protein operates within xenobiotic degradation. Dienlactone hydrolase; part of the Fusarium detoxification of benzoxazolinone cluster 1 (FDB1) involved in the degradation of benzoxazolinones produced by the host plant. Maize, wheat, and rye produce the 2 benzoxazinone phytoanticipins 2,4-dihy-droxy-7-methoxy-1,4-benzoxazin-3-one (DIMBOA) and 2,4-dihydroxy-1,4-benzoxazin-3-one (DIBOA) that, due to their inherent instability once released, spontaneously degrade to the more stable corresponding benzoxazolinones, 6-methoxy-2-benzoxazolinone (MBOA) and 2-benzoxazolinone (BOA), respectively. The first step in the detoxification of benzoxazolinones involves the hydrolysis of the cyclic ester bond of benzoxazolinones by the FDB1 cluster gamma-lactamase MBL1 to aminophenols. MBL1 is able to convert BOA into 2-aminophenol (2-AP), as well as MBOA into 5-methoxy-2-aminophenol (2-AMP). The FDB2 cluster N-malonyltransferase FDB2/NAT1 then metabolizes aminophenols via N-malonylation to non-toxic malonamic acids. FDB2/NAT1 converts 2-AP into N-(2-hydroxyphenyl) malonamic acid (HPMA) and 2-AMP into N-(2-hydroxy-4-methoxyphenyl) malonamic acid (HMPMA). The duplicated dienlactone hydrolases DLH1 and DLH2 may provide redundant function for hydrolyzing the lactone moiety in the BOA molecule. The roles of the amidases and other enzymes encoded by the 2 FDB clusters have not been identified so far. The polypeptide is Dienlactone hydrolase 1 (Gibberella moniliformis (strain M3125 / FGSC 7600) (Maize ear and stalk rot fungus)).